Consider the following 394-residue polypeptide: Ribulose bisphosphate carboxylase large chain (394 aa).

Lys5 carries the post-translational modification N6,N6,N6-trimethyllysine. The substrate site is built by Asn114 and Thr164. The Proton acceptor role is filled by Lys166. Lys168 contributes to the substrate binding site. Residues Lys192, Asp194, and Glu195 each coordinate Mg(2+). Position 192 is an N6-carboxylysine (Lys192). The Proton acceptor role is filled by His285. Residues Arg286, His318, and Ser370 each coordinate substrate.

Belongs to the RuBisCO large chain family. Type I subfamily. Heterohexadecamer of 8 large chains and 8 small chains. The cofactor is Mg(2+).

The protein resides in the plastid. It is found in the chloroplast. It carries out the reaction 2 (2R)-3-phosphoglycerate + 2 H(+) = D-ribulose 1,5-bisphosphate + CO2 + H2O. It catalyses the reaction D-ribulose 1,5-bisphosphate + O2 = 2-phosphoglycolate + (2R)-3-phosphoglycerate + 2 H(+). Functionally, ruBisCO catalyzes two reactions: the carboxylation of D-ribulose 1,5-bisphosphate, the primary event in carbon dioxide fixation, as well as the oxidative fragmentation of the pentose substrate in the photorespiration process. Both reactions occur simultaneously and in competition at the same active site. This Victoria cruziana (Santa Cruz water lily) protein is Ribulose bisphosphate carboxylase large chain (rbcL).